The chain runs to 113 residues: MANKAPSQMERSITTIIDTFHQYSRKEGHPDTLSKKEFRQMVEAQLATFMKKEKRNEALINDIMEDLDTNQDNQLSFEECMMLMAKLIFACHEKLHENNPRGHGHSHGKGCGK.

At Ala-2 the chain carries N-acetylalanine. 2 EF-hand domains span residues 13 to 48 and 55 to 90; these read ITTI…QLAT and RNEA…LIFA. His-21 serves as a coordination point for Zn(2+). Positions 24 and 29 each coordinate Ca(2+). Position 31 (Asp-31) interacts with Zn(2+). Residues Thr-32, Glu-37, Asp-68, Asn-70, Asp-72, Gln-74, and Glu-79 each contribute to the Ca(2+) site. His-92 and His-96 together coordinate Zn(2+). His-107 carries the post-translational modification Pros-methylhistidine.

The protein belongs to the S-100 family. As to quaternary structure, homodimer. Preferentially exists as a heterodimer or heterotetramer with S100A8 known as calprotectin (S100A8/A9). S100A9 interacts with ATP2A2. S100A9 interacts with AGER, and with the heterodimeric complex formed by TLR4 and LY96 in the presence of calcium and/or zinc ions. S100A9 binds quinoline-3-carboxamides in the presence of calcium and/or zinc ions. S100A9 interacts with amyloid-beta protein 40. Calprotectin (S100A8/9) interacts with CEACAM3 and tubulin filaments in a calcium-dependent manner. Heterotetrameric calprotectin (S100A8/A9) interacts with ANXA6 and associates with tubulin filaments in activated monocytes. Calprotectin (S100A8/9) interacts with NCF2/P67PHOX, RAC1, RAC2, CYBA and CYBB. Calprotectin (S100A8/9) interacts with NOS2 to form the iNOS-S100A8/A9 transnitrosylase complex; induced by LDL(ox). Calprotectin (S100A8/9) interacts with CD69. In terms of processing, phosphorylated. Phosphorylation inhibits activation of tubulin polymerization. Post-translationally, methylation at His-107 by METTL9 reduces zinc-binding without affecting heterodimerization with S100A8.

The protein resides in the secreted. The protein localises to the cytoplasm. It is found in the cytoskeleton. Its subcellular location is the cell membrane. In terms of biological role, S100A9 is a calcium- and zinc-binding protein which plays a prominent role in the regulation of inflammatory processes and immune response. It can induce neutrophil chemotaxis, adhesion, can increase the bactericidal activity of neutrophils by promoting phagocytosis via activation of SYK, PI3K/AKT, and ERK1/2 and can induce degranulation of neutrophils by a MAPK-dependent mechanism. Predominantly found as calprotectin (S100A8/A9) which has a wide plethora of intra- and extracellular functions. The intracellular functions include: facilitating leukocyte arachidonic acid trafficking and metabolism, modulation of the tubulin-dependent cytoskeleton during migration of phagocytes and activation of the neutrophilic NADPH-oxidase. Also participates in regulatory T-cell differentiation together with CD69. Activates NADPH-oxidase by facilitating the enzyme complex assembly at the cell membrane, transferring arachidonic acid, an essential cofactor, to the enzyme complex and S100A8 contributes to the enzyme assembly by directly binding to NCF2/P67PHOX. The extracellular functions involve pro-inflammatory, antimicrobial, oxidant-scavenging and apoptosis-inducing activities. Its pro-inflammatory activity includes recruitment of leukocytes, promotion of cytokine and chemokine production, and regulation of leukocyte adhesion and migration. Acts as an alarmin or a danger associated molecular pattern (DAMP) molecule and stimulates innate immune cells via binding to pattern recognition receptors such as Toll-like receptor 4 (TLR4) and receptor for advanced glycation endproducts (AGER). Binding to TLR4 and AGER activates the MAP-kinase and NF-kappa-B signaling pathways resulting in the amplification of the pro-inflammatory cascade. Has antimicrobial activity towards bacteria and fungi and exerts its antimicrobial activity probably via chelation of Zn(2+) which is essential for microbial growth. Can induce cell death via autophagy and apoptosis and this occurs through the cross-talk of mitochondria and lysosomes via reactive oxygen species (ROS) and the process involves BNIP3. Can regulate neutrophil number and apoptosis by an anti-apoptotic effect; regulates cell survival via ITGAM/ITGB and TLR4 and a signaling mechanism involving MEK-ERK. Its role as an oxidant scavenger has a protective role in preventing exaggerated tissue damage by scavenging oxidants. The iNOS-S100A8/A9 transnitrosylase complex is proposed to direct selective inflammatory stimulus-dependent S-nitrosylation of multiple targets such as GAPDH, NXA5, EZR, MSN and VIM by recognizing a [IL]-x-C-x-x-[DE] motif. The polypeptide is Protein S100-A9 (S100a9) (Mus musculus (Mouse)).